A 379-amino-acid polypeptide reads, in one-letter code: 1-deoxy-D-xylulose 5-phosphate reductoisomerase (379 aa).

7 residues coordinate NADPH: threonine 10, glycine 11, serine 12, isoleucine 13, arginine 38, asparagine 39, and asparagine 121. Residue lysine 122 coordinates 1-deoxy-D-xylulose 5-phosphate. Glutamate 123 is a binding site for NADPH. A Mn(2+)-binding site is contributed by aspartate 147. 1-deoxy-D-xylulose 5-phosphate is bound by residues serine 148, glutamate 149, serine 173, and histidine 196. A Mn(2+)-binding site is contributed by glutamate 149. Residue glycine 202 coordinates NADPH. 1-deoxy-D-xylulose 5-phosphate is bound by residues serine 209, asparagine 214, lysine 215, and glutamate 218. Mn(2+) is bound at residue glutamate 218.

It belongs to the DXR family. It depends on Mg(2+) as a cofactor. The cofactor is Mn(2+).

The enzyme catalyses 2-C-methyl-D-erythritol 4-phosphate + NADP(+) = 1-deoxy-D-xylulose 5-phosphate + NADPH + H(+). Its pathway is isoprenoid biosynthesis; isopentenyl diphosphate biosynthesis via DXP pathway; isopentenyl diphosphate from 1-deoxy-D-xylulose 5-phosphate: step 1/6. Catalyzes the NADPH-dependent rearrangement and reduction of 1-deoxy-D-xylulose-5-phosphate (DXP) to 2-C-methyl-D-erythritol 4-phosphate (MEP). The polypeptide is 1-deoxy-D-xylulose 5-phosphate reductoisomerase (Chlamydia trachomatis serovar L2 (strain ATCC VR-902B / DSM 19102 / 434/Bu)).